Reading from the N-terminus, the 292-residue chain is MLGAWAVEGTAVALLRLLLLLLPPAIRGPGLGVAGVAGAAGAGLPESVIWAVNAGGEAHVDVHGIHFRKDPLEGRVGRASDYGMKLPILRSNPEDQILYQTERYNEETFGYEVPIKEEGDYVLVLKFAEVYFAQSQQKVFDVRLNGHVVVKDLDIFDRVGHSTAHDEIIPMSIRKGKLSVQGEVSTFTGKLYIEFVKGYYDNPKVCALYIMAGTVDDVPKLQPHPGLEKKEEEEEEEEYDEGSNLKKQTNKNRVQSGPRTPNPYASDNSSLMFPILVAFGVFIPTLFCLCRL.

The first 28 residues, 1-28 (MLGAWAVEGTAVALLRLLLLLLPPAIRG), serve as a signal peptide directing secretion. The Lumenal segment spans residues 29–269 (PGLGVAGVAG…TPNPYASDNS (241 aa)). Tyr-82, Tyr-104, Tyr-131, Phe-132, and Asp-201 together coordinate a carbohydrate. Residues 221 to 265 (LQPHPGLEKKEEEEEEEEYDEGSNLKKQTNKNRVQSGPRTPNPYA) form a disordered region. Positions 231–241 (EEEEEEEEYDE) are enriched in acidic residues. A compositionally biased stretch (polar residues) spans 245 to 265 (LKKQTNKNRVQSGPRTPNPYA). Asn-268 carries an N-linked (GlcNAc...) asparagine glycan. A helical transmembrane segment spans residues 270-290 (SLMFPILVAFGVFIPTLFCLC). Residues 291–292 (RL) lie on the Cytoplasmic side of the membrane.

Belongs to the malectin family. As to quaternary structure, interacts with the oligosaccharyltransferase (OST) complex.

It localises to the endoplasmic reticulum membrane. Carbohydrate-binding protein with a strong ligand preference for Glc2-N-glycan. May play a role in the early steps of protein N-glycosylation. This is Malectin from Homo sapiens (Human).